The sequence spans 276 residues: uncharacterized protein (276 aa).

The N-terminal stretch at methionine 1–alanine 19 is a signal peptide. A lipid anchor (N-palmitoyl cysteine) is attached at cysteine 20. Cysteine 20 carries S-diacylglycerol cysteine lipidation.

The protein belongs to the NlpA lipoprotein family.

It is found in the cell membrane. This is an uncharacterized protein from Bacillus subtilis (strain 168).